The following is a 317-amino-acid chain: Putative HTH-type transcriptional regulatory protein TGAM_1316 (317 aa).

The HTH cro/C1-type domain occupies 131 to 189 (LKKLREKHGYSVGELASLLGVSRKSLLNYERNEQAVSLEVALRMEELFDEPIAEPIDVL). The segment at residues 142-161 (VGELASLLGVSRKSLLNYER) is a DNA-binding region (H-T-H motif).

The polypeptide is Putative HTH-type transcriptional regulatory protein TGAM_1316 (Thermococcus gammatolerans (strain DSM 15229 / JCM 11827 / EJ3)).